The chain runs to 169 residues: Endoribonuclease YbeY (169 aa).

The disordered stretch occupies residues Gly-72–Glu-95. 3 residues coordinate Zn(2+): His-131, His-135, and His-141.

This sequence belongs to the endoribonuclease YbeY family. Zn(2+) serves as cofactor.

Its subcellular location is the cytoplasm. In terms of biological role, single strand-specific metallo-endoribonuclease involved in late-stage 70S ribosome quality control and in maturation of the 3' terminus of the 16S rRNA. The polypeptide is Endoribonuclease YbeY (Oleidesulfovibrio alaskensis (strain ATCC BAA-1058 / DSM 17464 / G20) (Desulfovibrio alaskensis)).